The chain runs to 788 residues: 5-methyltetrahydropteroyltriglutamate--homocysteine methyltransferase (788 aa).

5-methyltetrahydropteroyltri-L-glutamate contacts are provided by residues 24 to 27 (RELK) and lysine 140. L-homocysteine contacts are provided by residues 463 to 465 (IGS) and glutamate 516. Residues 463-465 (IGS) and glutamate 516 contribute to the L-methionine site. 5-methyltetrahydropteroyltri-L-glutamate-binding positions include 547–548 (RC) and tryptophan 593. Aspartate 631 contacts L-homocysteine. An L-methionine-binding site is contributed by aspartate 631. Glutamate 637 serves as a coordination point for 5-methyltetrahydropteroyltri-L-glutamate. Zn(2+) contacts are provided by histidine 673, cysteine 675, and glutamate 697. The active-site Proton donor is the histidine 726. A Zn(2+)-binding site is contributed by cysteine 758.

The protein belongs to the vitamin-B12 independent methionine synthase family. Requires Zn(2+) as cofactor.

The enzyme catalyses 5-methyltetrahydropteroyltri-L-glutamate + L-homocysteine = tetrahydropteroyltri-L-glutamate + L-methionine. Its pathway is amino-acid biosynthesis; L-methionine biosynthesis via de novo pathway; L-methionine from L-homocysteine (MetE route): step 1/1. In terms of biological role, catalyzes the transfer of a methyl group from 5-methyltetrahydrofolate to homocysteine resulting in methionine formation. This Rhodopseudomonas palustris (strain TIE-1) protein is 5-methyltetrahydropteroyltriglutamate--homocysteine methyltransferase.